The following is a 788-amino-acid chain: Protein FAR1-RELATED SEQUENCE 5 (788 aa).

The FAR1 domain occupies Ala-87 to Pro-179. The MULE domain maps to Thr-299–Gln-395. The SWIM-type zinc finger occupies Phe-584–Asn-616. The tract at residues Ser-713–Glu-733 is disordered. Residues Glu-731–Asp-768 are a coiled coil.

This sequence belongs to the FHY3/FAR1 family. Expressed in hypocotyls, rosette and cauline leaves, inflorescences stems, flowers and siliques.

It localises to the nucleus. Putative transcription activator involved in regulating light control of development. This is Protein FAR1-RELATED SEQUENCE 5 (FRS5) from Arabidopsis thaliana (Mouse-ear cress).